The chain runs to 136 residues: Large ribosomal subunit protein uL16 (136 aa).

Belongs to the universal ribosomal protein uL16 family. In terms of assembly, part of the 50S ribosomal subunit.

Its function is as follows. Binds 23S rRNA and is also seen to make contacts with the A and possibly P site tRNAs. In Pasteurella multocida (strain Pm70), this protein is Large ribosomal subunit protein uL16.